The sequence spans 444 residues: Transcription activator AKTR-3 (444 aa).

The zn(2)-C6 fungal-type DNA-binding region spans 16 to 43; sequence CDFCTQSKLRCNKNKPSCRRCTIQQQPC. The disordered stretch occupies residues 49 to 89; it reads RRTGRPPKHPRTANDCQEANGQHGEQDPVTSTPGGSCQQQS. Residues 50–59 are compositionally biased toward basic residues; that stretch reads RTGRPPKHPR. The segment covering 76–89 has biased composition (polar residues); the sequence is PVTSTPGGSCQQQS.

It localises to the nucleus. Its function is as follows. Transcription factor that regulates the expression of the gene clusters that mediate the biosynthesis of the host-selective toxins (HSTs) AK-toxins responsible for Japanese pear black spot disease by the Japanese pear pathotype. AK-toxins are esters of 9,10-epoxy 8-hydroxy 9-methyldecatrienoic acid (EDA). On cellular level, AK-toxins affect plasma membrane of susceptible cells and cause a sudden increase in loss of K(+) after a few minutes of toxin treatment. This chain is Transcription activator AKTR-3, found in Alternaria alternata (Alternaria rot fungus).